The primary structure comprises 332 residues: MNTETTQDTTEAKLPGERLREARERLGLTQQTIAERLCLKITTVRDIEDGTTPADLAPTFLRGYIRSYAKLVHLPEDNLLPIMDKQAVPKAISVSPMQSFSLKKSRKKRDGWLMIITWLVVLVVLGLTGAWWWQNHQAQQAEINSMVDHASSMQSQTEGQSVPLMDNSAPQETSTAGSAATPPSTPVDLSATIAATPSTPPSSTTASSAAPSSQSPSQANATQSQAAGNALLGAGAVAPAATVADSNPVSAAHALVMTFTADCWLEVTDVSGKKLFSGMQRNGSTLNLDGQSPYQLKIGAPAAVQIKFQGKPVDLSRFVRSSQVARLTLTAE.

Residues 1 to 111 (MNTETTQDTT…LKKSRKKRDG (111 aa)) lie on the Cytoplasmic side of the membrane. The HTH cro/C1-type domain maps to 19–71 (LREARERLGLTQQTIAERLCLKITTVRDIEDGTTPADLAPTFLRGYIRSYAKL). A DNA-binding region (H-T-H motif) is located at residues 30–49 (QQTIAERLCLKITTVRDIED). The chain crosses the membrane as a helical; Signal-anchor for type II membrane protein span at residues 112–132 (WLMIITWLVVLVVLGLTGAWW). At 133–332 (WQNHQAQQAE…QVARLTLTAE (200 aa)) the chain is on the periplasmic side. The segment at 149–225 (HASSMQSQTE…PSQANATQSQ (77 aa)) is disordered. Polar residues-rich tracts occupy residues 151–160 (SSMQSQTEGQ) and 168–182 (SAPQ…AATP). Residues 190 to 225 (SATIAATPSTPPSSTTASSAAPSSQSPSQANATQSQ) show a composition bias toward low complexity.

It belongs to the RodZ family.

It localises to the cell inner membrane. Its function is as follows. Cytoskeletal protein that is involved in cell-shape control through regulation of the length of the long axis. In Pectobacterium atrosepticum (strain SCRI 1043 / ATCC BAA-672) (Erwinia carotovora subsp. atroseptica), this protein is Cytoskeleton protein RodZ.